The sequence spans 527 residues: Peptide chain release factor 3 (527 aa).

In terms of domain architecture, tr-type G spans 9 to 277 (AKRRTFAIIS…CIVDWAPQPL (269 aa)). GTP-binding positions include 18–25 (SHPDAGKT), 86–90 (DTPGH), and 140–143 (NKLD).

The protein belongs to the TRAFAC class translation factor GTPase superfamily. Classic translation factor GTPase family. PrfC subfamily.

The protein localises to the cytoplasm. Its function is as follows. Increases the formation of ribosomal termination complexes and stimulates activities of RF-1 and RF-2. It binds guanine nucleotides and has strong preference for UGA stop codons. It may interact directly with the ribosome. The stimulation of RF-1 and RF-2 is significantly reduced by GTP and GDP, but not by GMP. In Pseudomonas paraeruginosa (strain DSM 24068 / PA7) (Pseudomonas aeruginosa (strain PA7)), this protein is Peptide chain release factor 3.